The sequence spans 63 residues: Large ribosomal subunit protein uL30 (63 aa).

It belongs to the universal ribosomal protein uL30 family. Part of the 50S ribosomal subunit.

This chain is Large ribosomal subunit protein uL30, found in Bradyrhizobium sp. (strain BTAi1 / ATCC BAA-1182).